A 26-amino-acid chain; its full sequence is Melittin (26 aa).

Gly1 carries the N-formylglycine; partial modification. Position 26 is a glutamic acid 1-amide (Glu26).

Belongs to the melittin family. Monomer (in solution and for integration into membranes), homotetramer (in solution and potentially as a toroidal pore in membranes), and potenially homomultimer (as a toroidal pore in membranes). In terms of tissue distribution, expressed by the venom gland.

It localises to the secreted. The protein localises to the target cell membrane. In terms of biological role, main toxin of bee venom with strong hemolytic activity and antimicrobial activity. It has enhancing effects on bee venom phospholipase A2 activity. This amphipathic toxin binds to negatively charged membrane surface and forms pore by inserting into lipid bilayers inducing the leakage of ions and molecules and the enhancement of permeability that ultimately leads to cell lysis. It acts as a voltage-gated pore with higher selectivity for anions over cations. The ion conductance has been shown to be voltage-dependent. Self-association of melittin in membranes is promoted by high ionic strength, but not by the presence of negatively charged lipids. In vivo, intradermal injection into healthy human volunteers produce sharp pain sensation and an inflammatory response. It produces pain by activating primary nociceptor cells directly and indirectly due to its ability to activate plasma membrane phospholipase A2 and its pore-forming activity. The sequence is that of Melittin (MELT) from Apis dorsata (Giant honeybee).